The following is a 264-amino-acid chain: Small ribosomal subunit protein uS2 (264 aa).

Positions 222 to 246 (GRSENKDEQNEQGEQIAPVTNEEKQ) are disordered.

This sequence belongs to the universal ribosomal protein uS2 family.

The chain is Small ribosomal subunit protein uS2 from Helicobacter hepaticus (strain ATCC 51449 / 3B1).